A 134-amino-acid polypeptide reads, in one-letter code: Ribonuclease VapC (134 aa).

The region spanning 4 to 124 (IVDTSIIIAL…NTKDFKRIPE (121 aa)) is the PINc domain. Asp6 lines the Mg(2+) pocket.

It belongs to the PINc/VapC protein family. Mg(2+) serves as cofactor.

Its function is as follows. Toxic component of a type II toxin-antitoxin (TA) system. Has ssRNase activity. Its RNase activity is partially neutralized by cognate antitoxin VapB. Rapidly induces apoptosis upon microinjection into mouse fibroblasts (L929 line). Probably contributes to host cell death if bacterial cell lysis occurs during host infection. The protein is Ribonuclease VapC of Rickettsia bellii (strain RML369-C).